A 215-amino-acid chain; its full sequence is Protein Syd (215 aa).

Belongs to the Syd family.

It localises to the cell inner membrane. Its function is as follows. Interacts with the SecY protein in vivo. May bind preferentially to an uncomplexed state of SecY, thus functioning either as a chelating agent for excess SecY in the cell or as a regulatory factor that negatively controls the translocase function. This chain is Protein Syd, found in Shewanella amazonensis (strain ATCC BAA-1098 / SB2B).